The primary structure comprises 170 residues: ATP synthase subunit b (170 aa).

The helical transmembrane segment at 11-31 (AFTFGDAFFTLFAFAILLVLI) threads the bilayer.

The protein belongs to the ATPase B chain family. F-type ATPases have 2 components, F(1) - the catalytic core - and F(0) - the membrane proton channel. F(1) has five subunits: alpha(3), beta(3), gamma(1), delta(1), epsilon(1). F(0) has three main subunits: a(1), b(2) and c(10-14). The alpha and beta chains form an alternating ring which encloses part of the gamma chain. F(1) is attached to F(0) by a central stalk formed by the gamma and epsilon chains, while a peripheral stalk is formed by the delta and b chains.

The protein localises to the cell membrane. In terms of biological role, f(1)F(0) ATP synthase produces ATP from ADP in the presence of a proton or sodium gradient. F-type ATPases consist of two structural domains, F(1) containing the extramembraneous catalytic core and F(0) containing the membrane proton channel, linked together by a central stalk and a peripheral stalk. During catalysis, ATP synthesis in the catalytic domain of F(1) is coupled via a rotary mechanism of the central stalk subunits to proton translocation. Its function is as follows. Component of the F(0) channel, it forms part of the peripheral stalk, linking F(1) to F(0). The polypeptide is ATP synthase subunit b (Listeria innocua serovar 6a (strain ATCC BAA-680 / CLIP 11262)).